Reading from the N-terminus, the 276-residue chain is A-factor receptor protein (276 aa).

One can recognise an HTH tetR-type domain in the interval 8 to 68 (VQTWRSIVDA…AIMDEQTSTV (61 aa)). The segment at residues 31–50 (AISEILRRAKVTKGALYFHF) is a DNA-binding region (H-T-H motif). Over residues 207–220 (EKAEREEQEARIAA) the composition is skewed to basic and acidic residues. Residues 207–276 (EKAEREEQEA…AGVAAGGVVA (70 aa)) are disordered. The segment covering 221 to 235 (EAKGAGSDAATDSGS) has biased composition (low complexity). Over residues 236–257 (RSGGSGLRGGGSGRGPRAGGAG) the composition is skewed to gly residues.

In terms of assembly, homodimer or multimer. Binds to both DNA and A-factor as a homodimer.

It is found in the cytoplasm. Functionally, represses adpA expression by binding to the promoter region in the absence of A-factor, causing repression of streptomycin production and of sporulation. The polypeptide is A-factor receptor protein (arpA) (Streptomyces griseus).